A 445-amino-acid polypeptide reads, in one-letter code: WD repeat domain phosphoinositide-interacting protein 2 (445 aa).

The WD 1 repeat unit spans residues 182–222 (AHDSPLAALAFDASGTKLATASEKGTVIRVFSIPEGQKLFE). The L/FRRG motif motif lies at 223 to 226 (FRRG). WD repeat units lie at residues 228–267 (KRCVSICSLAFSMDGMFLSASSNTETVHIFKLEAVREKPP) and 311–349 (GHKNICSLTTIQKIPRLLVGASDGYLYMYNLDPQEGGEC). Ser395 carries the post-translational modification Phosphoserine.

It belongs to the WD repeat PROPPIN family. In terms of assembly, interacts with TECPR1. Interacts with ATG16L1. Interacts with ATG5. Interacts with WIPI1. Interacts with WDR45. May interact with NUDC. Interacts with ULK1 and RB1CC1.

The protein resides in the preautophagosomal structure membrane. Component of the autophagy machinery that controls the major intracellular degradation process by which cytoplasmic materials are packaged into autophagosomes and delivered to lysosomes for degradation. Involved in an early step of the formation of preautophagosomal structures. Binds and is activated by phosphatidylinositol 3-phosphate (PtdIns3P) forming on membranes of the endoplasmic reticulum upon activation of the upstream ULK1 and PI3 kinases. Mediates ER-isolation membranes contacts by interacting with the ULK1:RB1CC1 complex and PtdIns3P. Once activated, WIPI2 recruits at phagophore assembly sites the ATG12-ATG5-ATG16L1 complex that directly controls the elongation of the nascent autophagosomal membrane. The protein is WD repeat domain phosphoinositide-interacting protein 2 of Mus musculus (Mouse).